Consider the following 352-residue polypeptide: MSNSAVSSADSIKLTEYSHGAGCGCKISPKVLTTILASQLPVFTDPNLLVGNQSRDDAAVYKLNDEIGIISTTDFFMPIVDDPFTFGRIAATNAISDIYAMGGTPMMAIAILGWPVNKLPAEIAQQVVDGGRQACMEAGIMLAGGHSIDAPEPIFGLAVTGQIALTDLKQNDTAKAGDRLYLTKPIGIGILTTAQKQKKLKDEDSQIAVNAMCQLNSIGAKIAKITGVNALTDVTGFGLAGHLLEVCQGAKLTAKLDLDSVPLLPRALDYLAQGCIPGGTHRNYDSYGEHLPALTDHQKAILCDPQTSGGLLVAVSSEAEAELVALLNAHQIEPICIGSLETPTSTANVVLC.

C23 is an active-site residue. ATP-binding positions include K26 and S54–D56. Residue D57 coordinates Mg(2+). Residues D74, D97, and G145–S147 each bind ATP. D97 lines the Mg(2+) pocket. A Mg(2+)-binding site is contributed by D233.

This sequence belongs to the selenophosphate synthase 1 family. Class I subfamily. As to quaternary structure, homodimer. It depends on Mg(2+) as a cofactor.

It carries out the reaction hydrogenselenide + ATP + H2O = selenophosphate + AMP + phosphate + 2 H(+). Its function is as follows. Synthesizes selenophosphate from selenide and ATP. The protein is Selenide, water dikinase of Shewanella sp. (strain MR-7).